We begin with the raw amino-acid sequence, 141 residues long: Transmembrane protein 216 (141 aa).

A run of 4 helical transmembrane segments spans residues 15 to 35 (VLFF…LLIF), 49 to 69 (LVLD…RLFF), 82 to 102 (LGIS…YLLL), and 115 to 135 (SILL…LATF).

As to quaternary structure, part of the tectonic-like complex (also named B9 complex). Interacts with TMEM107.

The protein localises to the membrane. Its subcellular location is the cytoplasm. It is found in the cytoskeleton. It localises to the cilium basal body. Its function is as follows. Part of the tectonic-like complex which is required for tissue-specific ciliogenesis and may regulate ciliary membrane composition. This is Transmembrane protein 216 (Tmem216) from Mus musculus (Mouse).